Reading from the N-terminus, the 578-residue chain is Triokinase/FMN cyclase (578 aa).

The DhaK domain maps to 9 to 336; it reads SVAGCADDAL…IDAETTASAW (328 aa). Dihydroxyacetone contacts are provided by residues 56-59, Lys-109, and Asp-114; that span reads GSGH. The active-site Tele-hemiaminal-histidine intermediate is the His-221. Ser-350 carries the phosphoserine modification. The DhaL domain occupies 372–571; the sequence is KQMVLVLEWV…AAAILRAILE (200 aa). Residues 401 to 404, 446 to 447, Gly-486, and 494 to 495 each bind ATP; these read DGDC, SS, and TM. Ser-511 and Ser-545 each carry phosphoserine. 556–558 provides a ligand contact to ATP; that stretch reads DPG.

Homodimer. Interacts with IFIH1 (via the CARD domains), the interaction is inhibited by viral infection. Mg(2+) is required as a cofactor. Mn(2+) serves as cofactor. It depends on Co(2+) as a cofactor.

The catalysed reaction is dihydroxyacetone + ATP = dihydroxyacetone phosphate + ADP + H(+). It carries out the reaction D-glyceraldehyde + ATP = D-glyceraldehyde 3-phosphate + ADP + H(+). It catalyses the reaction FAD = riboflavin cyclic-4',5'-phosphate + AMP + H(+). With respect to regulation, each activity is inhibited by the substrate(s) of the other. Functionally, catalyzes both the phosphorylation of dihydroxyacetone and of glyceraldehyde, and the splitting of ribonucleoside diphosphate-X compounds among which FAD is the best substrate. Represses IFIH1-mediated cellular antiviral response. This chain is Triokinase/FMN cyclase (TKFC), found in Bos taurus (Bovine).